Consider the following 2319-residue polypeptide: Neurogenic locus notch homolog protein 3 (2319 aa).

Residues 1 to 14 show a composition bias toward basic residues; the sequence is MGPGARGRRRRRRL. The interval 1–20 is disordered; that stretch reads MGPGARGRRRRRRLMALPPP. Positions 1–40 are cleaved as a signal peptide; the sequence is MGPGARGRRRRRRLMALPPPPPPMRALPLLLLLLAGLGAA. 3 consecutive EGF-like domains span residues 41-79, 80-120, and 121-158; these read APPC…ERCQ, LEDP…PDCS, and LPDP…RNCR. The Extracellular portion of the chain corresponds to 41–1645; the sequence is APPCLDGSPC…LEPPEQSVPL (1605 aa). 99 disulfide bridges follow: cysteine 44–cysteine 56, cysteine 50–cysteine 67, cysteine 69–cysteine 78, cysteine 84–cysteine 95, cysteine 89–cysteine 108, cysteine 110–cysteine 119, cysteine 125–cysteine 136, cysteine 130–cysteine 146, cysteine 148–cysteine 157, cysteine 164–cysteine 176, cysteine 170–cysteine 185, cysteine 187–cysteine 196, cysteine 203–cysteine 214, cysteine 208–cysteine 224, cysteine 226–cysteine 235, cysteine 242–cysteine 253, cysteine 247–cysteine 262, cysteine 264–cysteine 273, cysteine 280–cysteine 293, cysteine 287–cysteine 302, cysteine 304–cysteine 313, cysteine 320–cysteine 331, cysteine 325–cysteine 340, cysteine 342–cysteine 351, cysteine 357–cysteine 368, cysteine 362–cysteine 379, cysteine 381–cysteine 390, cysteine 397–cysteine 410, cysteine 404–cysteine 419, cysteine 421–cysteine 430, cysteine 437–cysteine 448, cysteine 442–cysteine 457, cysteine 459–cysteine 468, cysteine 475–cysteine 486, cysteine 480–cysteine 495, cysteine 497–cysteine 506, cysteine 513–cysteine 524, cysteine 518–cysteine 533, cysteine 535–cysteine 544, cysteine 551–cysteine 561, cysteine 556–cysteine 570, cysteine 572–cysteine 581, cysteine 588–cysteine 599, cysteine 593–cysteine 608, cysteine 610–cysteine 619, cysteine 626–cysteine 636, cysteine 631–cysteine 645, cysteine 647–cysteine 656, cysteine 663–cysteine 674, cysteine 668–cysteine 683, cysteine 685–cysteine 694, cysteine 701–cysteine 711, cysteine 706–cysteine 720, cysteine 722–cysteine 731, cysteine 740–cysteine 751, cysteine 745–cysteine 760, cysteine 762–cysteine 771, cysteine 777–cysteine 788, cysteine 782–cysteine 798, cysteine 800–cysteine 809, cysteine 816–cysteine 828, cysteine 822–cysteine 837, cysteine 839–cysteine 848, cysteine 855–cysteine 866, cysteine 860–cysteine 875, cysteine 877–cysteine 886, cysteine 893–cysteine 903, cysteine 898–cysteine 912, cysteine 914–cysteine 923, cysteine 930–cysteine 941, cysteine 935–cysteine 950, cysteine 952–cysteine 961, cysteine 968–cysteine 979, cysteine 973–cysteine 988, cysteine 990–cysteine 999, cysteine 1006–cysteine 1017, cysteine 1011–cysteine 1024, cysteine 1026–cysteine 1035, cysteine 1042–cysteine 1063, cysteine 1057–cysteine 1072, cysteine 1074–cysteine 1083, cysteine 1090–cysteine 1101, cysteine 1095–cysteine 1110, cysteine 1112–cysteine 1121, cysteine 1128–cysteine 1139, cysteine 1133–cysteine 1148, cysteine 1150–cysteine 1159, cysteine 1166–cysteine 1184, cysteine 1178–cysteine 1193, cysteine 1195–cysteine 1204, cysteine 1211–cysteine 1224, cysteine 1216–cysteine 1234, cysteine 1236–cysteine 1245, cysteine 1252–cysteine 1263, cysteine 1257–cysteine 1277, cysteine 1279–cysteine 1288, cysteine 1295–cysteine 1306, cysteine 1300–cysteine 1315, and cysteine 1317–cysteine 1326. The 38-residue stretch at 160–197 folds into the EGF-like 4; calcium-binding domain; that stretch reads DIDECRAGASCRHGGTCINTPGSFHCLCPLGYTGLLCE. One can recognise an EGF-like 5 domain in the interval 199–236; that stretch reads PIVPCAPSPCRNGGTCRQSSDVTYDCACLPGFEGQNCE. The EGF-like 6; calcium-binding domain occupies 238 to 274; it reads NVDDCPGHRCLNGGTCVDGVNTYNCQCPPEWTGQFCT. Positions 276–314 constitute an EGF-like 7 domain; it reads DVDECQLQPNACHNGGTCFNLLGGHSCVCVNGWTGESCS. One can recognise an EGF-like 8; calcium-binding domain in the interval 316 to 352; that stretch reads NIDDCATAVCFHGATCHDRVASFYCACPMGKTGLLCH. The 39-residue stretch at 353 to 391 folds into the EGF-like 9 domain; it reads LDDACVSNPCHEDAICDTNPVSGRAICTCPPGFTGGACD. Residues 393-431 form the EGF-like 10; calcium-binding domain; sequence DVDECSIGANPCEHLGRCVNTQGSFLCQCGRGYTGPRCE. Residues 433–469 form the EGF-like 11; calcium-binding domain; that stretch reads DVNECLSGPCRNQATCLDRIGQFTCICMAGFTGTFCE. Residues 471–507 form the EGF-like 12; calcium-binding domain; sequence DIDECQSSPCVNGGVCKDRVNGFSCTCPSGFSGSTCQ. An EGF-like 13; calcium-binding domain is found at 509-545; it reads DVDECASTPCRNGAKCVDQPDGYECRCAEGFEGTLCE. The EGF-like 14; calcium-binding domain occupies 547–582; that stretch reads NVDDCSPDPCHHGRCVDGIASFSCACAPGYTGIRCE. Residues 584-620 enclose the EGF-like 15; calcium-binding domain; sequence QVDECRSQPCRYGGKCLDLVDKYLCRCPPGTTGVNCE. The EGF-like 16; calcium-binding domain maps to 622–657; it reads NIDDCASNPCTFGVCRDGINRYDCVCQPGFTGPLCN. The region spanning 659 to 695 is the EGF-like 17; calcium-binding domain; sequence EINECASSPCGEGGSCVDGENGFHCLCPPGSLPPLCL. EGF-like domains follow at residues 697–732, 736–772, and 773–810; these read ANHP…PRCS, APDA…HQCE, and VLSP…PRCQ. An EGF-like 21; calcium-binding domain is found at 812–849; that stretch reads DVDECAGASPCGPHGTCTNLPGSFRCICHGGYTGPFCD. Residues 851–887 form the EGF-like 22; calcium-binding domain; sequence DIDDCDPNPCLNGGSCQDGVGSFSCSCLSGFAGPRCA. The region spanning 889–924 is the EGF-like 23; calcium-binding domain; that stretch reads DVDECLSSPCGPGTCTDHVASFTCTCPPGYGGFHCE. EGF-like domains follow at residues 926–962, 964–1000, 1002–1036, 1038–1084, and 1086–1122; these read DLLD…THCQ, KVDP…NQCQ, PVDW…PLCD, PSLP…SHCE, and EVDP…DSCE. One can recognise an EGF-like 29; calcium-binding domain in the interval 1124 to 1160; sequence DVDECASQPCQNGGSCIDLVAHYLCSCPPGTLGVLCE. Residues 1162-1205 form the EGF-like 30; calcium-binding domain; it reads NEDDCGPGPSLDSGLRCLHNGTCVDLVGGFRCNCPPGYTGLHCE. A glycan (N-linked (GlcNAc...) asparagine) is linked at asparagine 1181. EGF-like domains follow at residues 1207–1246, 1248–1289, 1291–1327, and 1337–1375; these read DINE…PRCQ, ALFP…LRCE, VARS…PSCR, and TNTS…PRCE. Asparagine 1338 carries an N-linked (GlcNAc...) asparagine glycan. 12 disulfides stabilise this stretch: cysteine 1341–cysteine 1352, cysteine 1346–cysteine 1363, cysteine 1365–cysteine 1374, cysteine 1389–cysteine 1412, cysteine 1394–cysteine 1407, cysteine 1403–cysteine 1419, cysteine 1430–cysteine 1453, cysteine 1435–cysteine 1448, cysteine 1444–cysteine 1460, cysteine 1469–cysteine 1495, cysteine 1477–cysteine 1490, and cysteine 1486–cysteine 1502. 3 LNR repeats span residues 1389–1429, 1430–1467, and 1469–1507; these read CPRA…PWRQ, CEAL…GRDR, and CNPV…SEVP. A glycan (N-linked (GlcNAc...) asparagine) is linked at asparagine 1440. Residues 1646-1666 form a helical membrane-spanning segment; it reads LPLLVAGAVFLLVIFVLGVMV. The Cytoplasmic portion of the chain corresponds to 1667-2319; sequence ARRKREHSTL…EVTPKRQVMA (653 aa). ANK repeat units follow at residues 1840–1869, 1873–1903, 1907–1936, 1940–1969, and 1973–2002; these read TGET…DTNA, SGRT…DLDA, DGST…DVNA, LGKS…NKDM, and KEET…NREI. Disordered stretches follow at residues 2026–2046 and 2059–2129; these read LDQP…PLLC and QSGT…EGPY. Residues 2029-2046 show a composition bias toward low complexity; sequence PSGPRSPSGPHGLGPLLC. Omega-N-methylarginine is present on arginine 2175. The tract at residues 2197 to 2319 is disordered; that stretch reads LNPATPVSPH…EVTPKRQVMA (123 aa). The segment covering 2263-2288 has biased composition (low complexity); sequence SLSDWSDSTPSPATATSATAAGALPA. Residues 2297-2306 show a composition bias toward polar residues; it reads SLPQSQTQLG.

It belongs to the NOTCH family. As to quaternary structure, heterodimer of a C-terminal fragment N(TM) and a N-terminal fragment N(EC) which are probably linked by disulfide bonds. Interacts with MAML1, MAML2 and MAML3 which act as transcriptional coactivators for NOTCH3. Interacts with PSMA1. Interacts with HIF1AN. Synthesized in the endoplasmic reticulum as an inactive form which is proteolytically cleaved by a furin-like convertase in the trans-Golgi network before it reaches the plasma membrane to yield an active, ligand-accessible form. Cleavage results in a C-terminal fragment N(TM) and a N-terminal fragment N(EC). Following ligand binding, it is cleaved by TNF-alpha converting enzyme (TACE) to yield a membrane-associated intermediate fragment called notch extracellular truncation (NEXT). This fragment is then cleaved by presenilin dependent gamma-secretase to release a notch-derived peptide containing the intracellular domain (NICD) from the membrane. Post-translationally, phosphorylated. In terms of processing, hydroxylated by HIF1AN. Expressed in postnatal central nervous system (CNS) germinal zones and, in early postnatal life, within numerous cells throughout the CNS. It is more highly localized to ventricular germinal zones.

The protein localises to the cell membrane. Its subcellular location is the nucleus. In terms of biological role, functions as a receptor for membrane-bound ligands Jagged1, Jagged2 and Delta1 to regulate cell-fate determination. Upon ligand activation through the released notch intracellular domain (NICD) it forms a transcriptional activator complex with RBPJ/RBPSUH and activates genes of the enhancer of split locus. Affects the implementation of differentiation, proliferation and apoptotic programs. Acts instructively to control the cell fate determination of CNS multipotent progenitor cells, resulting in astroglial induction and neuron/oligodendrocyte suppression. The polypeptide is Neurogenic locus notch homolog protein 3 (Notch3) (Rattus norvegicus (Rat)).